Consider the following 126-residue polypeptide: Ribosome-binding factor A (126 aa).

It belongs to the RbfA family. Monomer. Binds 30S ribosomal subunits, but not 50S ribosomal subunits or 70S ribosomes.

Its subcellular location is the cytoplasm. In terms of biological role, one of several proteins that assist in the late maturation steps of the functional core of the 30S ribosomal subunit. Associates with free 30S ribosomal subunits (but not with 30S subunits that are part of 70S ribosomes or polysomes). Required for efficient processing of 16S rRNA. May interact with the 5'-terminal helix region of 16S rRNA. The sequence is that of Ribosome-binding factor A from Clostridioides difficile (strain 630) (Peptoclostridium difficile).